The following is a 477-amino-acid chain: Homeobox protein Meis2 (477 aa).

A required for interaction with PBX1 region spans residues 71 to 191; sequence DALKRDKDAI…KMPIDLVIDE (121 aa). Positions 110–193 constitute an MEIS N-terminal domain; it reads GGDVCSSDSF…PIDLVIDERD (84 aa). The span at 193–203 shows a compositional bias: basic and acidic residues; the sequence is DGSSKSDHEEL. The segment at 193 to 283 is disordered; the sequence is DGSSKSDHEE…KKRQKKRGIF (91 aa). Polar residues-rich tracts occupy residues 204–217 and 239–251; these read SGSS…NPSS and GHAS…SSEQ. The segment at residues 276–338 is a DNA-binding region (homeobox; TALE-type); that stretch reads RQKKRGIFPK…NARRRIVQPM (63 aa). The interval 299–333 is interaction with DNA; the sequence is LTHPYPSEEQKKQLAQDTGLTILQVNNWFINARRR. Residues 340-477 are transcriptional activation domain; the sequence is DQSNRAGFLL…GGQVMDIHAQ (138 aa).

The protein belongs to the TALE/MEIS homeobox family. Monomer and homodimer. Heterodimer with HOXB13. Isoform Meis2A interacts with TLX1. Isoform Meis2B interacts with HOXA13 and PBX1 isoform PBX1b. Isoform Meis2D interacts with SP1, SP3 and KLF4. Isoform Meis2D interacts with PBX1 isoform PBX1a; the interaction partially relieves MEIS2 autoinhibition. Isoform Meis2B is part of a PDX1:PBX1b:MEIS2b complex; Meis2B is recruited by PBX1b and can be replaced by isoform Meis2D in a small fraction of complexes. Can form trimeric complexes including HOXB8 and PBX2 or PBX3. In terms of tissue distribution, displays spatially restricted expression patterns in the developing nervous system, limbs, face, and in various viscera. In adult, it is mainly expressed in the brain and female genital tract, with a different distribution of the alternative splice forms in these organs. Lower expression in lung and only basal level in heart, liver, kidney, spleen, and testis. Expressed in pancreatic islets (beta-cells only).

The protein localises to the nucleus. Its subcellular location is the cytoplasm. It localises to the perinuclear region. Functionally, involved in transcriptional regulation. Binds to HOX or PBX proteins to form dimers, or to a DNA-bound dimer of PBX and HOX proteins and thought to have a role in stabilization of the homeoprotein-DNA complex. Isoform Meis2B is required for the activity of a PDX1:PBX1b:MEIS2b complex in pancreatic acinar cells involved in the transcriptional activation of the ELA1 enhancer; the complex binds to the enhancer B element and cooperates with the transcription factor 1 complex (PTF1) bound to the enhancer A element; MEIS2 is not involved in complex DNA-binding. Probably in complex with PBX1, is involved in transcriptional regulation by KLF4. Isoforms Meis2B and Meis2D can bind to a EPHA8 promoter sequence containing the DNA motif 5'-CGGTCA-3'; in cooperation with a PBX protein (such as PBX2) is proposed to be involved in the transcriptional activation of EPHA8 in the developing midbrain. May be involved in regulation of myeloid differentiation. Can bind to the DNA sequence 5'-TGACAG-3'in the activator ACT sequence of the D(1A) dopamine receptor (DRD1) promoter and activate DRD1 transcription. The protein is Homeobox protein Meis2 (Meis2) of Mus musculus (Mouse).